We begin with the raw amino-acid sequence, 98 residues long: Protein Vpr (98 aa).

The tract at residues 1–42 is homooligomerization; sequence MEQLPEDQGPQREPYNEWTLEILEELKREAVRHFPRDWLHQL. 2 positions are modified to phosphoserine; by host: S79 and S98.

Belongs to the HIV-1 VPR protein family. As to quaternary structure, homooligomer, may form homodimer. Interacts with p6-gag region of the Pr55 Gag precursor protein through a (Leu-X-X)4 motif near the C-terminus of the P6gag protein. Interacts with host UNG. May interact with host RAD23A/HHR23A. Interacts with host VPRBP/DCAF1, leading to hijack the CUL4A-RBX1-DDB1-DCAF1/VPRBP complex, mediating ubiquitination of host proteins such as TERT and ZGPAT and arrest of the cell cycle in G2 phase. Phosphorylated on several residues by host. These phosphorylations regulate VPR activity for the nuclear import of the HIV-1 pre-integration complex.

It is found in the virion. The protein resides in the host nucleus. It localises to the host extracellular space. In terms of biological role, during virus replication, may deplete host UNG protein, and incude G2-M cell cycle arrest. Acts by targeting specific host proteins for degradation by the 26S proteasome, through association with the cellular CUL4A-DDB1 E3 ligase complex by direct interaction with host VPRPB/DCAF-1. Cell cycle arrest reportedly occurs within hours of infection and is not blocked by antiviral agents, suggesting that it is initiated by the VPR carried into the virion. Additionally, VPR induces apoptosis in a cell cycle dependent manner suggesting that these two effects are mechanistically linked. Detected in the serum and cerebrospinal fluid of AIDS patient, VPR may also induce cell death to bystander cells. During virus entry, plays a role in the transport of the viral pre-integration (PIC) complex to the host nucleus. This function is crucial for viral infection of non-dividing macrophages. May act directly at the nuclear pore complex, by binding nucleoporins phenylalanine-glycine (FG)-repeat regions. This Pan troglodytes (Chimpanzee) protein is Protein Vpr.